Here is a 147-residue protein sequence, read N- to C-terminus: Large ribosomal subunit protein uL16 (147 aa).

This sequence belongs to the universal ribosomal protein uL16 family. Part of the 50S ribosomal subunit.

Functionally, binds 23S rRNA and is also seen to make contacts with the A and possibly P site tRNAs. The chain is Large ribosomal subunit protein uL16 from Finegoldia magna (strain ATCC 29328 / DSM 20472 / WAL 2508) (Peptostreptococcus magnus).